A 580-amino-acid polypeptide reads, in one-letter code: Probable RNA-binding protein CG14230 (580 aa).

The RRM domain occupies 4-81 (TRFFLADLPT…EKLRVSLAKE (78 aa)). Positions 89-100 (REREENQRREQG) are enriched in basic and acidic residues. 2 disordered regions span residues 89–131 (RERE…EDEE) and 173–211 (QHRK…KSAI). Polar residues predominate over residues 110-120 (PSSQLLVQSGQ). S231 carries the post-translational modification Phosphoserine. Acidic residues-rich tracts occupy residues 254-263 (ENDDDEEEEQ) and 298-313 (NEEE…EPEE). 3 disordered regions span residues 254–316 (ENDD…ESER), 333–395 (SAND…SAVS), and 463–520 (PFSY…IPRN). 2 stretches are compositionally biased toward basic and acidic residues: residues 348–358 (LRFDPAKEGHQ) and 365–377 (QPKE…EETS). Residues 386 to 395 (AGNSQASAVS) show a composition bias toward polar residues. S468 is subject to Phosphoserine. Position 475 is a phosphothreonine (T475).

The polypeptide is Probable RNA-binding protein CG14230 (Drosophila melanogaster (Fruit fly)).